A 131-amino-acid polypeptide reads, in one-letter code: 1,4-dihydroxy-2-naphthoyl-CoA hydrolase (131 aa).

Aspartate 7 is an active-site residue.

Belongs to the 4-hydroxybenzoyl-CoA thioesterase family. DHNA-CoA hydrolase subfamily.

It catalyses the reaction 1,4-dihydroxy-2-naphthoyl-CoA + H2O = 1,4-dihydroxy-2-naphthoate + CoA + H(+). It functions in the pathway cofactor biosynthesis; phylloquinone biosynthesis. The protein operates within quinol/quinone metabolism; 1,4-dihydroxy-2-naphthoate biosynthesis; 1,4-dihydroxy-2-naphthoate from chorismate: step 7/7. In terms of biological role, catalyzes the hydrolysis of 1,4-dihydroxy-2-naphthoyl-CoA (DHNA-CoA) to 1,4-dihydroxy-2-naphthoate (DHNA), a reaction involved in phylloquinone (vitamin K1) biosynthesis. In Synechococcus sp. (strain RCC307), this protein is 1,4-dihydroxy-2-naphthoyl-CoA hydrolase.